The sequence spans 215 residues: Ribonuclease HII (215 aa).

The 196-residue stretch at 19–214 (KNVIGVDEAG…KILETEEEKT (196 aa)) folds into the RNase H type-2 domain. 3 residues coordinate a divalent metal cation: D25, E26, and D121.

It belongs to the RNase HII family. It depends on Mn(2+) as a cofactor. Requires Mg(2+) as cofactor.

The protein resides in the cytoplasm. The enzyme catalyses Endonucleolytic cleavage to 5'-phosphomonoester.. Endonuclease that specifically degrades the RNA of RNA-DNA hybrids. This Fusobacterium nucleatum subsp. nucleatum (strain ATCC 25586 / DSM 15643 / BCRC 10681 / CIP 101130 / JCM 8532 / KCTC 2640 / LMG 13131 / VPI 4355) protein is Ribonuclease HII.